The primary structure comprises 864 residues: MTTEKSLVTEAENSQHQQKEEGEEAINSGQQEPQQEESCQTAAEGDNWCEQKLKASNGDTPTHEDLTKNKERTSESRGLSRLFSSFLKRPKSQVSEEEGKEVESDKEKGEGGQKEIEFGTSLDEEIILKAPIAAPEPELKTDPSLDLHSLSSAETQPAQEELREDPDFEIKEGEGLEECSKIEVKEESPQSKAETELKASQKPIRKHRNMHCKVSLLDDTVYECVVEKHAKGQDLLKRVCEHLNLLEEDYFGLAIWDNATSKTWLDSAKEIKKQVRGVPWNFTFNVKFYPPDPAQLTEDITRYYLCLQLRQDIVAGRLPCSFATLALLGSYTIQSELGDYDPELHGVDYVSDFKLAPNQTKELEEKVMELHKSYRSMTPAQADLEFLENAKKLSMYGVDLHKAKDLEGVDIILGVCSSGLLVYKDKLRINRFPWPKVLKISYKRSSFFIKIRPGEQEQYESTIGFKLPSYRAAKKLWKVCVEHHTFFRLTSTDTIPKSKFLALGSKFRYSGRTQAQTRQASALIDRPAPHFERTASKRASRSLDGAAAVDSADRSPRPTSAPAITQGQVAEGGVLDASAKKTVVPKAQKETVKAEVKKEDEPPEQAEPEPTEAWKVEKTHIEVTVPTSNGDQTQKLAEKTEDLIRMRKKKRERLDGENIYIRHSNLMLEDLDKSQEEIKKHHASISELKKNFMESVPEPRPSEWDKRLSTHSPFRTLNINGQIPTGEGPPLVKTQTVTISDNANAVKSEIPTKDVPIVHTETKTITYEAAQTDDNSGDLDPGVLLTAQTITSETPSSTTTTQITKTVKGGISETRIEKRIVITGDADIDHDQVLVQAIKEAKEQHPDMSVTKVVVHQETEIADE.

Composition is skewed to polar residues over residues 1-16 (MTTEKSLVTEAENSQH) and 27-41 (NSGQQEPQQEESCQT). 3 disordered regions span residues 1–122 (MTTE…GTSL), 136–170 (EPELKTDPSLDLHSLSSAETQPAQEELREDPDFEI), and 182–202 (IEVKEESPQSKAETELKASQK). S14 bears the Phosphoserine mark. T60 is subject to Phosphothreonine; by CDK1. Residues 61-75 (PTHEDLTKNKERTSE) show a composition bias toward basic and acidic residues. The segment covering 76-87 (SRGLSRLFSSFL) has biased composition (low complexity). 10 positions are modified to phosphoserine: S84, S85, S95, S104, S121, S149, S151, S152, S188, and S191. Residues 101-117 (EVESDKEKGEGGQKEIE) show a composition bias toward basic and acidic residues. Positions 149–158 (SLSSAETQPA) are enriched in polar residues. Positions 182-199 (IEVKEESPQSKAETELKA) are enriched in basic and acidic residues. One can recognise an FERM domain in the interval 210–491 (MHCKVSLLDD…EHHTFFRLTS (282 aa)). Y222 carries the phosphotyrosine modification. Residue T378 is modified to Phosphothreonine. The interval 494–614 (TIPKSKFLAL…QAEPEPTEAW (121 aa)) is hydrophilic. Disordered regions lie at residues 518-572 (RQAS…VAEG) and 586-611 (KAQKETVKAEVKKEDEPPEQAEPEPT). S521, S540, S542, and S555 each carry phosphoserine. Basic and acidic residues predominate over residues 587–600 (AQKETVKAEVKKED). A compositionally biased stretch (acidic residues) spans 601-610 (EPPEQAEPEP). Residues 615-713 (KVEKTHIEVT…WDKRLSTHSP (99 aa)) are spectrin--actin-binding. Y660 is subject to Phosphotyrosine; by EGFR. Residues S664, S674, S684, and S709 each carry the phosphoserine modification. S712 is modified (phosphoserine; by CDK1). A C-terminal (CTD) region spans residues 714–864 (FRTLNINGQI…VHQETEIADE (151 aa)). A phosphothreonine mark is found at T736 and T859.

As to quaternary structure, binds with a high affinity to glycophorin and with lower affinity to band III protein. Associates with the nuclear mitotic apparatus. Interacts with calmodulin. Interacts with CPAP. Interacts with DLG1. Also found to associate with contractile apparatus and tight junctions. Interacts with NUMA1; this interaction is negatively regulated by CDK1 during metaphase and promotes anaphase-specific localization of NUMA1 in symmetrically dividing cells. Interacts with ATP2B1; regulates small intestinal calcium absorption through regulation of membrane expression of ATP2B1. Phosphorylated at multiple sites by different protein kinases and each phosphorylation event selectively modulates the protein's functions. In terms of processing, phosphorylation on Tyr-660 reduces the ability of 4.1 to promote the assembly of the spectrin/actin/4.1 ternary complex. Post-translationally, O-glycosylated; contains N-acetylglucosamine side chains in the C-terminal domain.

The protein localises to the cytoplasm. It localises to the cytoskeleton. It is found in the cell cortex. The protein resides in the nucleus. In terms of biological role, protein 4.1 is a major structural element of the erythrocyte membrane skeleton. It plays a key role in regulating membrane physical properties of mechanical stability and deformability by stabilizing spectrin-actin interaction. Recruits DLG1 to membranes. Required for dynein-dynactin complex and NUMA1 recruitment at the mitotic cell cortex during anaphase. The polypeptide is Protein 4.1 (Homo sapiens (Human)).